A 131-amino-acid chain; its full sequence is UPF0102 protein RPD_0400 (131 aa).

Belongs to the UPF0102 family.

In Rhodopseudomonas palustris (strain BisB5), this protein is UPF0102 protein RPD_0400.